The chain runs to 384 residues: MPFDSTNADLSVIPVKTPAELKRFIALPARLNAKDPNWITPLFMERTDALTPKTNPFFDHAEVQLFLATRGGRDVGRISAQIDQLTPQPTEGRLDGHFGMIAAEDDPAVFNVLFRAAEDWLRARGRTHAVGPFNLSINEEVGLLVWGFDTPPMVLMGHDPVYAGPRVEEQGYAKAQDLFAYKADETGDIPEIAQRRVKRGLPSGVVLRQLDMSRYDQEVQTLTEILNDAWSDNWGFTPTTEAETRQLAKSLKQVIDQRLVWFSEIDGEAAGVVVFLPNVNEAIADLKGKLLPFGWAKLLWRLKVKGVKSARIPLMGVKKKFQTSQRGRMLPFWMMKASRDMAMSLGYNRYEISWVLEANKAMTHIAENVGGTHYKTYRVYEKAL.

Its subcellular location is the cytoplasm. The enzyme catalyses 3-oxosphinganine + a fatty acyl-CoA = N-acyl-3-oxosphinganine + CoA + H(+). The catalysed reaction is 3-oxosphinganine + tetradecanoyl-CoA = N-tetradecanoyl-3-oxosphinganine + CoA + H(+). It catalyses the reaction 3-oxosphinganine + hexadecanoyl-CoA = N-hexadecanoyl-3-oxosphinganine + CoA + H(+). It carries out the reaction 3-oxosphinganine + (9Z)-hexadecenoyl-CoA = N-(9Z-hexadecenoyl)-3-oxosphinganine + CoA + H(+). The enzyme catalyses 3-oxosphinganine + octanoyl-CoA = N-octanoyl-3-oxosphinganine + CoA + H(+). The catalysed reaction is 3-oxosphinganine + decanoyl-CoA = N-decanoyl-3-oxosphinganine + CoA + H(+). It catalyses the reaction 3-oxosphinganine + dodecanoyl-CoA = N-dodecanoyl-3-oxosphinganine + CoA + H(+). It carries out the reaction 3-oxosphinganine + octadecanoyl-CoA = N-octadecanoyl-3-oxosphinganine + CoA + H(+). The enzyme catalyses 3-oxosphinganine + eicosanoyl-CoA = N-eicosanoyl-3-oxosphinganine + CoA + H(+). The catalysed reaction is 3-oxosphinganine + docosanoyl-CoA = N-docosanoyl-3-ketodihydrosphingosine + CoA + H(+). It catalyses the reaction 3-oxosphinganine + tetracosanoyl-CoA = N-tetracosanoyl-3-oxosphinganine + CoA + H(+). Its pathway is lipid metabolism; sphingolipid metabolism. Involved in de novo bacterial ceramide synthesis. Catalyzes the condensation of 3-oxosphinganine with an acyl-CoA to generate oxidized ceramides. Can use acyl-CoA substrates ranging from C8 to C24, with highest in vitro activity with C14 and very little activity with acyl-CoA thioesters of 18 carbons or longer. May have a preference for monounsaturated acyl-CoA substrates, as it has a threefold greater preference for C16:1-CoA over C16:0-CoA as a substrate in vitro. In Caulobacter vibrioides (strain NA1000 / CB15N) (Caulobacter crescentus), this protein is Bacterial ceramide synthase.